The following is a 301-amino-acid chain: uncharacterized protein (301 aa).

It belongs to the asfivirus E301R family. In terms of assembly, interacts with host IRF3.

In terms of biological role, plays a role in the inhibition of host innate immune system by acting as a negatively regulator of type I interferon production. Mechanistically, interacts with and prevents host IRF3 nuclear localization to inhibit its transcriptional activity. This is an uncharacterized protein from African swine fever virus (isolate Warthog/Namibia/Wart80/1980) (ASFV).